The sequence spans 262 residues: Mlc titration factor A (262 aa).

Zn(2+) is bound by residues histidine 111, histidine 148, histidine 152, and glutamate 211.

It belongs to the MtfA family. In terms of assembly, interacts with Mlc. It depends on Zn(2+) as a cofactor.

It is found in the cytoplasm. In terms of biological role, involved in the modulation of the activity of the glucose-phosphotransferase system (glucose-PTS). Interacts with the transcriptional repressor Mlc, preventing its interaction with DNA and leading to the modulation of expression of genes regulated by Mlc, including ptsG, which encodes the PTS system glucose-specific EIICB component. Functionally, shows zinc-dependent metallopeptidase activity. The polypeptide is Mlc titration factor A (Serratia proteamaculans (strain 568)).